We begin with the raw amino-acid sequence, 248 residues long: Cell division protein ZapD (248 aa).

This sequence belongs to the ZapD family. In terms of assembly, interacts with FtsZ.

The protein localises to the cytoplasm. In terms of biological role, cell division factor that enhances FtsZ-ring assembly. Directly interacts with FtsZ and promotes bundling of FtsZ protofilaments, with a reduction in FtsZ GTPase activity. The polypeptide is Cell division protein ZapD (Aliivibrio fischeri (strain ATCC 700601 / ES114) (Vibrio fischeri)).